The chain runs to 149 residues: Large ribosomal subunit protein uL11 (149 aa).

It belongs to the universal ribosomal protein uL11 family. In terms of assembly, part of the ribosomal stalk of the 50S ribosomal subunit. Interacts with L10 and the large rRNA to form the base of the stalk. L10 forms an elongated spine to which L12 dimers bind in a sequential fashion forming a multimeric L10(L12)X complex. In terms of processing, one or more lysine residues are methylated.

Forms part of the ribosomal stalk which helps the ribosome interact with GTP-bound translation factors. The polypeptide is Large ribosomal subunit protein uL11 (Azorhizobium caulinodans (strain ATCC 43989 / DSM 5975 / JCM 20966 / LMG 6465 / NBRC 14845 / NCIMB 13405 / ORS 571)).